Reading from the N-terminus, the 63-residue chain is Large ribosomal subunit protein bL28 (63 aa).

It belongs to the bacterial ribosomal protein bL28 family.

The protein is Large ribosomal subunit protein bL28 of Clostridium beijerinckii (strain ATCC 51743 / NCIMB 8052) (Clostridium acetobutylicum).